The sequence spans 180 residues: ATP synthase subunit b 2 (180 aa).

The helical transmembrane segment at 33–53 threads the bilayer; it reads IFWLLVTLVAIYFLLTRVALP.

It belongs to the ATPase B chain family. F-type ATPases have 2 components, F(1) - the catalytic core - and F(0) - the membrane proton channel. F(1) has five subunits: alpha(3), beta(3), gamma(1), delta(1), epsilon(1). F(0) has three main subunits: a(1), b(2) and c(10-14). The alpha and beta chains form an alternating ring which encloses part of the gamma chain. F(1) is attached to F(0) by a central stalk formed by the gamma and epsilon chains, while a peripheral stalk is formed by the delta and b chains.

It is found in the cell inner membrane. Its function is as follows. F(1)F(0) ATP synthase produces ATP from ADP in the presence of a proton or sodium gradient. F-type ATPases consist of two structural domains, F(1) containing the extramembraneous catalytic core and F(0) containing the membrane proton channel, linked together by a central stalk and a peripheral stalk. During catalysis, ATP synthesis in the catalytic domain of F(1) is coupled via a rotary mechanism of the central stalk subunits to proton translocation. In terms of biological role, component of the F(0) channel, it forms part of the peripheral stalk, linking F(1) to F(0). The b'-subunit is a diverged and duplicated form of b found in plants and photosynthetic bacteria. This is ATP synthase subunit b 2 (atpF2) from Cereibacter sphaeroides (strain ATCC 17029 / ATH 2.4.9) (Rhodobacter sphaeroides).